The primary structure comprises 234 residues: Opacity protein opA56 (234 aa).

A signal peptide is located at residue Ala1.

The protein belongs to the opacity porin family.

It is found in the cell outer membrane. Its function is as follows. Implicated in a number of adherence functions. OPA proteins are implicated in pathogenesis and are subject to phase variation. This chain is Opacity protein opA56 (opaF), found in Neisseria gonorrhoeae.